We begin with the raw amino-acid sequence, 1295 residues long: Phosphoribosylformylglycinamidine synthase (1295 aa).

The segment at 305 to 327 (WPGAATGSGGEIRDEGATGRGAK) is disordered. ATP contacts are provided by residues 307-318 (GAATGSGGEIRD) and A678. Residues E718, N722, and D884 each coordinate Mg(2+). S886 serves as a coordination point for ATP. One can recognise a Glutamine amidotransferase type-1 domain in the interval 1042 to 1295 (VAVLREQGVN…IFRNARKQLG (254 aa)). The active-site Nucleophile is C1135. Residues H1260 and E1262 contribute to the active site.

This sequence in the N-terminal section; belongs to the FGAMS family. As to quaternary structure, monomer.

The protein localises to the cytoplasm. It carries out the reaction N(2)-formyl-N(1)-(5-phospho-beta-D-ribosyl)glycinamide + L-glutamine + ATP + H2O = 2-formamido-N(1)-(5-O-phospho-beta-D-ribosyl)acetamidine + L-glutamate + ADP + phosphate + H(+). It functions in the pathway purine metabolism; IMP biosynthesis via de novo pathway; 5-amino-1-(5-phospho-D-ribosyl)imidazole from N(2)-formyl-N(1)-(5-phospho-D-ribosyl)glycinamide: step 1/2. In terms of biological role, phosphoribosylformylglycinamidine synthase involved in the purines biosynthetic pathway. Catalyzes the ATP-dependent conversion of formylglycinamide ribonucleotide (FGAR) and glutamine to yield formylglycinamidine ribonucleotide (FGAM) and glutamate. This is Phosphoribosylformylglycinamidine synthase from Shigella boydii serotype 4 (strain Sb227).